Reading from the N-terminus, the 644-residue chain is MSKEKIIGIDLGTTNSCVAVMEGGDPVVIQNSEGARTTPSIVAFTAKGETIVGQFAKNQAITNAVNTIRSAKRFIGRRFNEAGDESKMVSYKVIRAGNDGVKFETVSGEFTPQEIAARVLQKMKKTAEDFLGHEVKKAVVTVPAYFNDEQRQATKDAGRIAGLEVERIINEPTAAALAYGFDKKKTNAKIAVYDLGGGTFDVSILELGDGVFEVKSTNGDTHLGGDDFDNVVMQWMIDEFKKQTGIDISGDKNTVQRLKEAAEKAKIELSGTSSTQINLPFITADASGPKHLDMTLTKAKFDEITRSLVERTRIPCINALKDAGLSASEIDEVILVGGSIRIPAVQALVKEIFGKEPNKSVNPDEVVAVGAAIQGGVLAGDVTDVLLLDVTPLSLGIETLGGVMTKLIERNTTIPTRKSQVFSTAADNQTTVSVHVLQGEREMASANRTLGRFDLVGIPSAPRGVPQIEVTFDIDANGIVHVSAKDLGTGKEQKIRIESSSGLSEEEIKKMVKDAEAHAEEDKKLREAADTKNELEAIVYQLEKTIGESADKLDESEKQRAQDEIKRGREAMESGDLERMKASRDSIQQVAMQIGQKIYSQAGPEQGAPGAEAGAGASQGASGTDANGEKVVDADYTVVDEDKK.

Phosphothreonine; by autocatalysis is present on threonine 199. Over residues 550-584 the composition is skewed to basic and acidic residues; that stretch reads ADKLDESEKQRAQDEIKRGREAMESGDLERMKASR. 2 disordered regions span residues 550-586 and 599-644; these read ADKL…SRDS and YSQA…EDKK. The segment covering 600-623 has biased composition (low complexity); it reads SQAGPEQGAPGAEAGAGASQGASG.

This sequence belongs to the heat shock protein 70 family.

Functionally, acts as a chaperone. In Leptospira biflexa serovar Patoc (strain Patoc 1 / Ames), this protein is Chaperone protein DnaK.